The chain runs to 506 residues: Aspartic proteinase A1 (506 aa).

An N-terminal signal peptide occupies residues 1 to 24 (MKIYSRTVAVSLIVSFLLCFSAFA). Positions 25 to 64 (ERNDGTFRVGLKKLKLDSKNRLAARVESKQEKPLRAYRLG) are cleaved as a propeptide — activation peptide. Residues 82–503 (YYGEIAIGTP…DFGNEQVGFA (422 aa)) form the Peptidase A1 domain. Asp-100 is a catalytic residue. Disulfide bonds link Cys-113/Cys-119 and Cys-278/Cys-282. The active site involves Asp-287. A Saposin B-type domain is found at 312–417 (VVSQQCKTVV…NELCERLPSP (106 aa)). Cystine bridges form between Cys-317–Cys-411, Cys-342–Cys-383, Cys-348–Cys-380, and Cys-425–Cys-462. Asn-397 carries N-linked (GlcNAc...) asparagine glycosylation.

This sequence belongs to the peptidase A1 family. As to expression, expressed in roots, leaves, stems, petals, carpels, seed pods and dry seeds.

Its subcellular location is the vacuole. In terms of biological role, involved in the breakdown of propeptides of storage proteins in protein-storage vacuoles. Possesses aspartic protease activity in vitro. This Arabidopsis thaliana (Mouse-ear cress) protein is Aspartic proteinase A1 (APA1).